A 416-amino-acid chain; its full sequence is Glutamyl-tRNA reductase (416 aa).

Substrate is bound by residues 51–54 (TCNR), Ser110, 115–117 (EPQ), and Gln121. Cys52 functions as the Nucleophile in the catalytic mechanism. 190 to 195 (GAGQTG) serves as a coordination point for NADP(+).

Belongs to the glutamyl-tRNA reductase family. Homodimer.

The enzyme catalyses (S)-4-amino-5-oxopentanoate + tRNA(Glu) + NADP(+) = L-glutamyl-tRNA(Glu) + NADPH + H(+). The protein operates within porphyrin-containing compound metabolism; protoporphyrin-IX biosynthesis; 5-aminolevulinate from L-glutamyl-tRNA(Glu): step 1/2. Functionally, catalyzes the NADPH-dependent reduction of glutamyl-tRNA(Glu) to glutamate 1-semialdehyde (GSA). The protein is Glutamyl-tRNA reductase of Francisella tularensis subsp. holarctica (strain OSU18).